The following is a 694-amino-acid chain: MALLLVSLLAFLGSGAGCHHWLCHCSDRVFLCQDSKVTEIPPDLPRNAIELRFVLTKLRVIPQGSFSGFKDLEKIEISQNDVLEVIEADVFSNLPKLHEIRIERANTLLYINPEAFQNLPNLRYLLISNTGIKHLPVVHKIQSLQKVLLDIQDNINLHTIARNSFMGLSFDSLILWLNKNGIQEIHNCAFNGTQLDELNLSDNNNLEELPNDVFRGASGPVILDISRTKVHSLPSHGLENLKKLRARSTYSLKKLPSLDKFVTLVEASLTYPSHCCAFANWRRQISELHPLCNKSVLRQDIDYVTQARDQNTSLIDDDLSYGKETDMMYSEFDYDLCNEVIDVTCSPKPDAFNPCEDIMGYNILRVLIWFISILAITGNITVLVILTTSQYKLTVPRFLMCNLAFADLCIGIYLLPIASVDIHTKSQYHNYAIDWQTAVGCDAAGFFTAFASELSVYTLTAIPLERWHTITHAMQLERKVQLRHAASVMVMGWVFAFAAALLPIFGVSSYMKVSICLPIDIDSPLSQLYVMALLVLNVLAFVVICGCYTHIYLTVRNPNIVSSSSDTKIAKRMATLIFTDFLCMAPISLFAISASLKAPLITVSKAKILLVLFYPINSCANPFLYAIFTKNFRRDFFILMGKFGCYEMQAQIYRTETSSTAHNFHSRKGHCPSAPRVTNSSSYMLVPLSQSAHN.

The N-terminal stretch at 1-17 is a signal peptide; sequence MALLLVSLLAFLGSGAG. Cystine bridges form between Cys-18–Cys-25 and Cys-23–Cys-32. The 29-residue stretch at 18-46 folds into the LRRNT domain; it reads CHHWLCHCSDRVFLCQDSKVTEIPPDLPR. The Extracellular portion of the chain corresponds to 18 to 365; that stretch reads CHHWLCHCSD…EDIMGYNILR (348 aa). LRR repeat units lie at residues 49–72, 73–97, 98–118, 119–143, 144–169, 170–192, 193–216, 217–240, and 241–259; these read IELRFVLTKLRVIPQGSFSGFKDL, EKIEISQNDVLEVIEADVFSNLPKL, HEIRIERANTLLYINPEAFQN, LPNLRYLLISNTGIKHLPVVHKIQS, LQKVLLDIQDNINLHTIARNSFMGLS, FDSLILWLNKNGIQEIHNCAFNG, TQLDELNLSDNNNLEELPNDVFRG, ASGPVILDISRTKVHSLPSHGLEN, and LKKLRARSTYSLKKLPSLD. Residues Asn-191 and Asn-199 are each glycosylated (N-linked (GlcNAc...) asparagine). Intrachain disulfides connect Cys-275–Cys-345, Cys-276–Cys-292, Cys-276–Cys-355, and Cys-292–Cys-337. N-linked (GlcNAc...) asparagine glycans are attached at residues Asn-293 and Asn-311. The helical transmembrane segment at 366-386 threads the bilayer; it reads VLIWFISILAITGNITVLVIL. Residues 387–397 lie on the Cytoplasmic side of the membrane; that stretch reads TTSQYKLTVPR. The helical transmembrane segment at 398-420 threads the bilayer; the sequence is FLMCNLAFADLCIGIYLLPIASV. Over 421–442 the chain is Extracellular; the sequence is DIHTKSQYHNYAIDWQTAVGCD. Cys-441 and Cys-516 form a disulfide bridge. The helical transmembrane segment at 443–464 threads the bilayer; the sequence is AAGFFTAFASELSVYTLTAIPL. The Cytoplasmic segment spans residues 465-484; that stretch reads ERWHTITHAMQLERKVQLRH. Residues 485–507 form a helical membrane-spanning segment; sequence AASVMVMGWVFAFAAALLPIFGV. Residues 508–527 are Extracellular-facing; the sequence is SSYMKVSICLPIDIDSPLSQ. Residues 528–549 traverse the membrane as a helical segment; it reads LYVMALLVLNVLAFVVICGCYT. The Cytoplasmic portion of the chain corresponds to 550–572; the sequence is HIYLTVRNPNIVSSSSDTKIAKR. The chain crosses the membrane as a helical span at residues 573–596; it reads MATLIFTDFLCMAPISLFAISASL. The Extracellular segment spans residues 597–607; it reads KAPLITVSKAK. The chain crosses the membrane as a helical span at residues 608-629; sequence ILLVLFYPINSCANPFLYAIFT. Residues 630–694 lie on the Cytoplasmic side of the membrane; the sequence is KNFRRDFFIL…LVPLSQSAHN (65 aa).

Belongs to the G-protein coupled receptor 1 family. FSH/LSH/TSH subfamily. In terms of assembly, homotrimer. Functions as a homotrimer binding the FSH hormone heterodimer composed of CGA and FSHB. Interacts with ARRB2. Interacts with APPL2; interaction is independent of follicle stimulating hormone stimulation. In terms of processing, N-glycosylated; indirectly required for FSH-binding, possibly via a conformational change that allows high affinity binding of hormone.

It is found in the cell membrane. In terms of biological role, g protein-coupled receptor for follitropin, the follicle-stimulating hormone. Through cAMP production activates the downstream PI3K-AKT and ERK1/ERK2 signaling pathways. This Mesocricetus auratus (Golden hamster) protein is Follicle-stimulating hormone receptor (FSHR).